Reading from the N-terminus, the 244-residue chain is Uridylate kinase (244 aa).

12 to 15 (KLSG) contacts ATP. The interval 20-25 (GERGVG) is involved in allosteric activation by GTP. G54 provides a ligand contact to UMP. ATP contacts are provided by G55 and R59. Residues D74 and 135–142 (IGSPYFST) contribute to the UMP site. 3 residues coordinate ATP: N163, Y169, and D172.

It belongs to the UMP kinase family. Homohexamer.

It localises to the cytoplasm. It catalyses the reaction UMP + ATP = UDP + ADP. It functions in the pathway pyrimidine metabolism; CTP biosynthesis via de novo pathway; UDP from UMP (UMPK route): step 1/1. With respect to regulation, allosterically activated by GTP. Inhibited by UTP. Functionally, catalyzes the reversible phosphorylation of UMP to UDP. In Streptococcus suis (strain 98HAH33), this protein is Uridylate kinase.